The primary structure comprises 463 residues: Hydroxyacid-oxoacid transhydrogenase, mitochondrial (463 aa).

It belongs to the iron-containing alcohol dehydrogenase family. Hydroxyacid-oxoacid transhydrogenase subfamily.

The protein resides in the mitochondrion. It catalyses the reaction (S)-3-hydroxybutanoate + 2-oxoglutarate = (R)-2-hydroxyglutarate + acetoacetate. The enzyme catalyses 4-hydroxybutanoate + 2-oxoglutarate = (R)-2-hydroxyglutarate + succinate semialdehyde. In terms of biological role, catalyzes the cofactor-independent reversible oxidation of gamma-hydroxybutyrate (GHB) to succinic semialdehyde (SSA) coupled to reduction of 2-ketoglutarate (2-KG) to D-2-hydroxyglutarate (D-2-HG). L-3-hydroxybutyrate (L-3-OHB) is also a substrate for HOT when using 2-KG as hydrogen acceptor, resulting in the formation of D-2-HG. The polypeptide is Hydroxyacid-oxoacid transhydrogenase, mitochondrial (adhfe1) (Xenopus tropicalis (Western clawed frog)).